The chain runs to 573 residues: Adenine deaminase (573 aa).

This sequence belongs to the metallo-dependent hydrolases superfamily. Adenine deaminase family. Mn(2+) is required as a cofactor.

It carries out the reaction adenine + H2O + H(+) = hypoxanthine + NH4(+). This is Adenine deaminase from Bacillus licheniformis (strain ATCC 14580 / DSM 13 / JCM 2505 / CCUG 7422 / NBRC 12200 / NCIMB 9375 / NCTC 10341 / NRRL NRS-1264 / Gibson 46).